We begin with the raw amino-acid sequence, 469 residues long: SWI/SNF complex subunit SWI3B (469 aa).

The segment at 1 to 42 (MAMKAPDPGGSGEILPSTPSLSETTSGGAAAASKSAQLPSSS) is disordered. Residues 15–42 (LPSTPSLSETTSGGAAAASKSAQLPSSS) show a composition bias toward low complexity. The 98-residue stretch at 48 to 145 (IHVPSYSSWF…YNSSASAKPL (98 aa)) folds into the SWIRM domain. The SANT domain maps to 223–274 (ESKPEWSDKEILLLLEAVMHYGDDWKKVASHVIGRTEKDCVSQFVKLPFGEQ). Basic and acidic residues-rich tracts occupy residues 293-306 (DSDI…DKDG) and 360-369 (DKNASRDPNR). Disordered stretches follow at residues 293-314 (DSDI…KRIK) and 360-387 (DKNA…ESER). The span at 370–380 (QDANAASSGET) shows a compositional bias: polar residues. Positions 423 to 447 (VHFEKLDLEMERSRKQLEEVRNLLF) form a coiled coil.

In terms of assembly, homodimers and heterodimers. Interacts with SWI3A, SWI3C, SWI3D, BSH, BRM and FCA (via C-terminus), and (via N-terminus) with HAB1. Interacts with MORC6 and SUVH9. In terms of tissue distribution, expressed in roots, stems, leaves, flowers and siliques.

The protein resides in the nucleus. Component of a multiprotein complex equivalent of the SWI/SNF complex, an ATP-dependent chromatin-remodeling complex, which is required for the positive and negative regulation of gene expression of a large number of genes. It changes chromatin structure by altering DNA-histone contacts within a nucleosome, leading eventually to a change in nucleosome position, thus facilitating or repressing binding of gene-specific transcription factors. May play an essential role in the transition from the vegetative to the reproductive phase of development. May be a positive regulator of ABA signaling. The chain is SWI/SNF complex subunit SWI3B (SWI3B) from Arabidopsis thaliana (Mouse-ear cress).